Reading from the N-terminus, the 239-residue chain is 4-hydroxy-tetrahydrodipicolinate reductase (239 aa).

Residues Gly8–Met13, Gly78–Thr80, and Ser102–Met105 contribute to the NAD(+) site. His134 (proton donor/acceptor) is an active-site residue. Position 135 (His135) interacts with (S)-2,3,4,5-tetrahydrodipicolinate. Lys138 functions as the Proton donor in the catalytic mechanism. Residue Gly144 to Thr145 participates in (S)-2,3,4,5-tetrahydrodipicolinate binding.

Belongs to the DapB family.

The protein localises to the cytoplasm. The catalysed reaction is (S)-2,3,4,5-tetrahydrodipicolinate + NAD(+) + H2O = (2S,4S)-4-hydroxy-2,3,4,5-tetrahydrodipicolinate + NADH + H(+). It catalyses the reaction (S)-2,3,4,5-tetrahydrodipicolinate + NADP(+) + H2O = (2S,4S)-4-hydroxy-2,3,4,5-tetrahydrodipicolinate + NADPH + H(+). The protein operates within amino-acid biosynthesis; L-lysine biosynthesis via DAP pathway; (S)-tetrahydrodipicolinate from L-aspartate: step 4/4. In terms of biological role, catalyzes the conversion of 4-hydroxy-tetrahydrodipicolinate (HTPA) to tetrahydrodipicolinate. In Rickettsia conorii (strain ATCC VR-613 / Malish 7), this protein is 4-hydroxy-tetrahydrodipicolinate reductase.